A 282-amino-acid polypeptide reads, in one-letter code: Pantothenate synthetase (282 aa).

30 to 37 (MGFLHDGH) is an ATP binding site. Catalysis depends on His37, which acts as the Proton donor. Gln60 is a (R)-pantoate binding site. A beta-alanine-binding site is contributed by Gln60. 146 to 149 (GQKD) serves as a coordination point for ATP. (R)-pantoate is bound at residue Gln152. ATP-binding positions include Ile175 and 183–186 (KSSR).

It belongs to the pantothenate synthetase family. As to quaternary structure, homodimer.

It localises to the cytoplasm. The catalysed reaction is (R)-pantoate + beta-alanine + ATP = (R)-pantothenate + AMP + diphosphate + H(+). It participates in cofactor biosynthesis; (R)-pantothenate biosynthesis; (R)-pantothenate from (R)-pantoate and beta-alanine: step 1/1. In terms of biological role, catalyzes the condensation of pantoate with beta-alanine in an ATP-dependent reaction via a pantoyl-adenylate intermediate. The chain is Pantothenate synthetase from Campylobacter jejuni subsp. jejuni serotype O:6 (strain 81116 / NCTC 11828).